A 453-amino-acid polypeptide reads, in one-letter code: Putative sodium-coupled neutral amino acid transporter 11 (453 aa).

Polar residues predominate over residues 1–10 (MSYQQPQLSG). A disordered region spans residues 1–34 (MSYQQPQLSGPLQRETDSSDRESLISGHEHGGKS). A compositionally biased stretch (basic and acidic residues) spans 14–32 (RETDSSDRESLISGHEHGG). The next 11 membrane-spanning stretches (helical) occupy residues 39–59 (AVFN…PYSM), 66–86 (LGIL…VLLI), 106–126 (GFPG…IAMI), 150–170 (GWFI…TLPL), 179–199 (LGKI…IVMT), 222–242 (AIQA…CFLV), 262–282 (ILVS…TFTG), 299–319 (VTFG…IECF), 337–357 (VFHT…SLMI), 359–379 (CLGI…IFII), and 398–418 (IMAC…FVMA). Asparagine 438 and asparagine 443 each carry an N-linked (GlcNAc...) asparagine glycan.

The protein belongs to the amino acid/polyamine transporter 2 family.

It localises to the membrane. Putative sodium-dependent amino acid/proton antiporter. The sequence is that of Putative sodium-coupled neutral amino acid transporter 11 (Slc38a11) from Mus musculus (Mouse).